A 124-amino-acid chain; its full sequence is Large ribosomal subunit protein uL22 (124 aa).

This sequence belongs to the universal ribosomal protein uL22 family. Part of the 50S ribosomal subunit.

In terms of biological role, this protein binds specifically to 23S rRNA; its binding is stimulated by other ribosomal proteins, e.g. L4, L17, and L20. It is important during the early stages of 50S assembly. It makes multiple contacts with different domains of the 23S rRNA in the assembled 50S subunit and ribosome. Functionally, the globular domain of the protein is located near the polypeptide exit tunnel on the outside of the subunit, while an extended beta-hairpin is found that lines the wall of the exit tunnel in the center of the 70S ribosome. The sequence is that of Large ribosomal subunit protein uL22 from Synechococcus sp. (strain JA-2-3B'a(2-13)) (Cyanobacteria bacterium Yellowstone B-Prime).